A 177-amino-acid polypeptide reads, in one-letter code: B-phycoerythrin beta chain (177 aa).

(2R,3E)-phycoerythrobilin is bound by residues Cys-50 and Cys-61. The residue at position 72 (Asn-72) is an N4-methylasparagine. (2R,3E)-phycoerythrobilin-binding residues include Cys-82 and Cys-158.

It belongs to the phycobiliprotein family. As to quaternary structure, heterotetramer of one alpha-1, one alpha-2, and two beta chains. Post-translationally, contains three covalently linked bilin chromophores.

The protein resides in the plastid. It is found in the chloroplast thylakoid membrane. Functionally, light-harvesting photosynthetic bile pigment-protein from the phycobiliprotein complex. This chain is B-phycoerythrin beta chain (cpeB), found in Guillardia theta (Cryptophyte).